A 277-amino-acid polypeptide reads, in one-letter code: Bifunctional protein FolD (277 aa).

Residues 160–162 (GAS), Ser-185, and Ile-226 each bind NADP(+).

It belongs to the tetrahydrofolate dehydrogenase/cyclohydrolase family. As to quaternary structure, homodimer.

The enzyme catalyses (6R)-5,10-methylene-5,6,7,8-tetrahydrofolate + NADP(+) = (6R)-5,10-methenyltetrahydrofolate + NADPH. It carries out the reaction (6R)-5,10-methenyltetrahydrofolate + H2O = (6R)-10-formyltetrahydrofolate + H(+). Its pathway is one-carbon metabolism; tetrahydrofolate interconversion. Its function is as follows. Catalyzes the oxidation of 5,10-methylenetetrahydrofolate to 5,10-methenyltetrahydrofolate and then the hydrolysis of 5,10-methenyltetrahydrofolate to 10-formyltetrahydrofolate. This Vesicomyosocius okutanii subsp. Calyptogena okutanii (strain HA) protein is Bifunctional protein FolD.